The primary structure comprises 186 residues: dCTP deaminase (186 aa).

DCTP is bound at residue 107–112 (KSTYAR). The active-site Proton donor/acceptor is the Glu-133. Positions 152, 166, and 176 each coordinate dCTP.

It belongs to the dCTP deaminase family. As to quaternary structure, homotrimer.

The enzyme catalyses dCTP + H2O + H(+) = dUTP + NH4(+). The protein operates within pyrimidine metabolism; dUMP biosynthesis; dUMP from dCTP (dUTP route): step 1/2. Catalyzes the deamination of dCTP to dUTP. In Campylobacter jejuni subsp. jejuni serotype O:2 (strain ATCC 700819 / NCTC 11168), this protein is dCTP deaminase.